The following is a 1416-amino-acid chain: DNA-directed RNA polymerase subunit beta' (1416 aa).

Zn(2+) is bound by residues Cys71, Cys73, Cys86, and Cys89. Residues Asp461, Asp463, and Asp465 each contribute to the Mg(2+) site. Cys815, Cys889, Cys896, and Cys899 together coordinate Zn(2+).

Belongs to the RNA polymerase beta' chain family. In terms of assembly, the RNAP catalytic core consists of 2 alpha, 1 beta, 1 beta' and 1 omega subunit. When a sigma factor is associated with the core the holoenzyme is formed, which can initiate transcription. Mg(2+) serves as cofactor. It depends on Zn(2+) as a cofactor.

The catalysed reaction is RNA(n) + a ribonucleoside 5'-triphosphate = RNA(n+1) + diphosphate. Functionally, DNA-dependent RNA polymerase catalyzes the transcription of DNA into RNA using the four ribonucleoside triphosphates as substrates. This chain is DNA-directed RNA polymerase subunit beta', found in Haemophilus influenzae (strain PittEE).